Here is a 37-residue protein sequence, read N- to C-terminus: Large ribosomal subunit protein bL36c (37 aa).

This sequence belongs to the bacterial ribosomal protein bL36 family.

Its subcellular location is the plastid. The protein localises to the chloroplast. This chain is Large ribosomal subunit protein bL36c, found in Piper cenocladum (Ant piper).